The following is a 245-amino-acid chain: 3-deoxy-manno-octulosonate cytidylyltransferase (245 aa).

Belongs to the KdsB family.

It localises to the cytoplasm. The catalysed reaction is 3-deoxy-alpha-D-manno-oct-2-ulosonate + CTP = CMP-3-deoxy-beta-D-manno-octulosonate + diphosphate. It functions in the pathway nucleotide-sugar biosynthesis; CMP-3-deoxy-D-manno-octulosonate biosynthesis; CMP-3-deoxy-D-manno-octulosonate from 3-deoxy-D-manno-octulosonate and CTP: step 1/1. Its pathway is bacterial outer membrane biogenesis; lipopolysaccharide biosynthesis. In terms of biological role, activates KDO (a required 8-carbon sugar) for incorporation into bacterial lipopolysaccharide in Gram-negative bacteria. In Rhodopseudomonas palustris (strain HaA2), this protein is 3-deoxy-manno-octulosonate cytidylyltransferase.